A 152-amino-acid chain; its full sequence is CASP-like protein 5B3 (152 aa).

Over 1 to 21 (MIDIPGTPGTLTGLVLRISQC) the chain is Cytoplasmic. The next 2 helical transmembrane spans lie at 22-42 (VFAA…SFTA) and 43-63 (FCYL…LAIL). At 64-77 (DTFALVRKKTLLSP) the chain is on the extracellular side. Residues 78–98 (VLVSLFVVGDWVTSTLSLAGA) form a helical membrane-spanning segment. At 99 to 127 (SSSAGITVLYFGDLGSCSFEAECWKYQLS) the chain is on the cytoplasmic side. Residues 128 to 148 (VALAFLCWITIAVSSLTTLWL) traverse the membrane as a helical segment. The Extracellular segment spans residues 149-152 (LASA).

The protein belongs to the Casparian strip membrane proteins (CASP) family. As to quaternary structure, homodimer and heterodimers. In terms of tissue distribution, expressed in the stele of the root and in leaves.

Its subcellular location is the cell membrane. This Arabidopsis thaliana (Mouse-ear cress) protein is CASP-like protein 5B3.